The following is a 331-amino-acid chain: MAVKISTIEVLILSLALLSFGHGCYGQLRLGFYSQNCQNVENIVSKVVGEAFIKDSSIAPAMIRLYFHDCFSNGCDASLLLDGSNSEKKASPNLSVRGYEVIDDIKSAVEKECDRVVSCADIIALATRDLVTLASGGKTRYEIPTGRLDGKISSALLVDLPSPKMTVAETAAKFDQRKLSLNDMVLLLGGHTIGVTHCSFIMDRLYNFQNTQKPDPSMDPKLVEELSAKCPKSSSTDGIISLDQNATSSNTMDVSFYKEIKVSRGVLHIDQKLAIDDLTSKMVTDIANGNDFLVRFGQAMVNLGSVRVISKPKDGEIRRSCRSTCNNPLCV.

Residues methionine 1 to glycine 26 form the signal peptide. Cystine bridges form between cysteine 37-cysteine 113, cysteine 70-cysteine 75, cysteine 119-cysteine 321, and cysteine 198-cysteine 230. The active-site Proton acceptor is the histidine 68. Residues aspartate 69, glycine 74, aspartate 76, and serine 78 each contribute to the Ca(2+) site. Proline 161 serves as a coordination point for substrate. Histidine 191 provides a ligand contact to heme b. Threonine 192 is a binding site for Ca(2+). An N-linked (GlcNAc...) asparagine glycan is attached at asparagine 245. Residues serine 248 and aspartate 253 each contribute to the Ca(2+) site.

This sequence belongs to the peroxidase family. Classical plant (class III) peroxidase subfamily. Requires heme b as cofactor. It depends on Ca(2+) as a cofactor. In terms of tissue distribution, expressed in roots, slightly in leaves.

Its subcellular location is the secreted. The enzyme catalyses 2 a phenolic donor + H2O2 = 2 a phenolic radical donor + 2 H2O. Removal of H(2)O(2), oxidation of toxic reductants, biosynthesis and degradation of lignin, suberization, auxin catabolism, response to environmental stresses such as wounding, pathogen attack and oxidative stress. These functions might be dependent on each isozyme/isoform in each plant tissue. This chain is Peroxidase 60 (PER60), found in Arabidopsis thaliana (Mouse-ear cress).